We begin with the raw amino-acid sequence, 523 residues long: Cytochrome b5 reductase 4 (523 aa).

Positions 54–130 constitute a Cytochrome b5 heme-binding domain; that stretch reads LIDVTEEELA…LKECLIGRMA (77 aa). His-89 and His-112 together coordinate heme. The region spanning 167–258 is the CS domain; the sequence is ESHPWYDWFQ…KEPVSWKSLG (92 aa). The region spanning 275–387 is the FAD-binding FR-type domain; that stretch reads LYYRKCRLAS…SNPQGTFSSF (113 aa). Residues 367–382 and 394–426 each bind FAD; these read ENLT…NPQG and DVFL…KAKL.

Belongs to the flavoprotein pyridine nucleotide cytochrome reductase family. FAD is required as a cofactor.

Its subcellular location is the endoplasmic reticulum. The catalysed reaction is 2 Fe(III)-[cytochrome b5] + NADH = 2 Fe(II)-[cytochrome b5] + NAD(+) + H(+). In terms of biological role, NADH-cytochrome b5 reductase involved in endoplasmic reticulum stress response pathway. This chain is Cytochrome b5 reductase 4 (cyb5r4), found in Xenopus tropicalis (Western clawed frog).